The primary structure comprises 264 residues: MALVVKGKVNINEFIDLSKSEKLLPSMFTPVKSVMVSKVDKIMVHKNESLSEVNLLKGVKLIEGGYVWLVGLVVSGEWNLPDNCRGGVSVCMVDKRMERADEATLGSYYTAAAKKRFQFKVVPNYGITTKDAKKNIWQVLVNIKNVKMSAGYCPLSLEFVSVCIVYKNNIKLGLREKVTSVKDGGPMELSEEVVDEFMENVPMSVRLAKFRTKPSKRGPKNNNNLGKGRSGGRPKPKSFDEVEKEFDNLIEDEAETSVADSDSY.

Residues 210–219 (FRTKPSKRGP) show a composition bias toward basic residues. The tract at residues 210 to 264 (FRTKPSKRGPKNNNNLGKGRSGGRPKPKSFDEVEKEFDNLIEDEAETSVADSDSY) is disordered. A compositionally biased stretch (basic and acidic residues) spans 237–247 (KSFDEVEKEFD).

This sequence belongs to the tobamovirus movement protein family. In terms of assembly, binds to host RBCS at the plasmodesmata; this interaction seems required for viral systemic movement. In resistant plants, interacts with host MBP2C at host microtubules; this interaction prevents virus cell to cell movement. In resistant plants, interacts with host resistance (R) protein (e.g. tomato ToMV resistance protein TM-2(2), AC Q71BG9) at the host plasma membrane; this interaction triggers host defense responses leading to programmed cell death.

It localises to the host cytoplasm. The protein localises to the host cytoskeleton. It is found in the host cell junction. Its subcellular location is the host plasmodesma. Transports viral genome to neighboring plant cells directly through plasmosdesmata, without any budding. The movement protein allows efficient cell to cell propagation, by bypassing the host cell wall barrier. Forms a ribonucleoprotein complex with viral RNA. Binds microtubules and modulates microtubule stability. Can bind double-stranded DNA. Triggers host hypersensitive defense reaction in incompatible plants harboring resistance (R) proteins. This chain is Movement protein (MP), found in Tomato mosaic virus (strain LII) (ToMV).